Consider the following 179-residue polypeptide: GTP-dependent dephospho-CoA kinase (179 aa).

Positions 55, 57, 74, 76, and 128 each coordinate GTP.

Belongs to the GTP-dependent DPCK family.

The catalysed reaction is 3'-dephospho-CoA + GTP = GDP + CoA + H(+). Its pathway is cofactor biosynthesis; coenzyme A biosynthesis. Catalyzes the GTP-dependent phosphorylation of the 3'-hydroxyl group of dephosphocoenzyme A to form coenzyme A (CoA). In Saccharolobus islandicus (strain M.16.27) (Sulfolobus islandicus), this protein is GTP-dependent dephospho-CoA kinase.